Here is a 309-residue protein sequence, read N- to C-terminus: Genome polyprotein (309 aa).

Residues G1–N40 lie on the Cytoplasmic side of the membrane. An important for lipid droplets localization region spans residues Y36–G39. Residues L41–A61 traverse the membrane as a helical segment. The propeptide at L50 to A63 is ER anchor for the core protein, removed in mature form by host signal peptidase. At S62 to G230 the chain is on the lumenal side. 3 N-linked (GlcNAc...) asparagine; by host glycosylation sites follow: N68, N81, and N106. The interval L137–R168 is important for fusion. The N-linked (GlcNAc...) asparagine; by host glycan is linked to N177. The helical transmembrane segment at I231–A251 threads the bilayer. Residues G252–W309 lie on the Lumenal side of the membrane. Residues T256–D282 are HVR1. N-linked (GlcNAc...) (high mannose) asparagine; by host glycans are attached at residues N289, N295, and N302.

This sequence belongs to the hepacivirus polyprotein family. Homooligomer. Interacts with E1 (via C-terminus). Interacts with the non-structural protein 5A. Interacts (via N-terminus) with host STAT1 (via SH2 domain); this interaction results in decreased STAT1 phosphorylation and ubiquitin-mediated proteasome-dependent STAT1 degradation, leading to decreased IFN-stimulated gene transcription. Interacts with host STAT3; this interaction constitutively activates STAT3. Interacts with host LTBR receptor. Interacts with host TNFRSF1A receptor and possibly induces apoptosis. Interacts with host HNRPK. Interacts with host YWHAE. Interacts with host UBE3A/E6AP. Interacts with host DDX3X. Interacts with host APOA2. Interacts with host RXRA protein. Interacts with host SP110 isoform 3/Sp110b; this interaction sequesters the transcriptional corepressor SP110 away from the nucleus. Interacts with host CREB3 nuclear transcription protein; this interaction triggers cell transformation. Interacts with host ACY3. Interacts with host C1QR1. Interacts with host RBM24; this interaction, which enhances the interaction of the mature core protein with 5'-UTR, may inhibit viral translation and favor replication. Interacts with host EIF2AK2/PKR; this interaction induces the autophosphorylation of EIF2AK2. Part of the viral assembly initiation complex composed of NS2, E1, E2, NS3, NS4A, NS5A and the mature core protein. In terms of assembly, forms a heterodimer with envelope glycoprotein E2. Interacts with mature core protein. Interacts with protease NS2. The heterodimer E1/E2 interacts with host CLDN1; this interaction plays a role in viral entry into host cell. Interacts with host SPSB2 (via C-terminus). Part of the viral assembly initiation complex composed of NS2, E1, E2, NS3, NS4A, NS5A and the mature core protein. As to quaternary structure, forms a heterodimer with envelope glycoprotein E1. Interacts with host CD81 and SCARB1 receptors; these interactions play a role in viral entry into host cell. Interacts with host EIF2AK2/PKR; this interaction inhibits EIF2AK2 and probably allows the virus to evade the innate immune response. Interacts with host CD209/DC-SIGN and CLEC4M/DC-SIGNR. Interact with host SPCS1; this interaction is essential for viral particle assembly. Interacts with protease NS2. The heterodimer E1/E2 interacts with host CLDN1; this interaction plays a role in viral entry into host cell. Part of the viral assembly initiation complex composed of NS2, E1, E2, NS3, NS4A, NS5A and the mature core protein. Post-translationally, specific enzymatic cleavages in vivo yield mature proteins. The structural proteins, core, E1, E2 and p7 are produced by proteolytic processing by host signal peptidases. The core protein precursor is synthesized as a 23 kDa, which is retained in the ER membrane through the hydrophobic signal peptide. Cleavage by the signal peptidase releases the 21 kDa mature core protein. The cleavage of the core protein precursor occurs between aminoacids 176 and 188 but the exact cleavage site is not known. Some degraded forms of the core protein appear as well during the course of infection. The other proteins (p7, NS2, NS3, NS4A, NS4B, NS5A and NS5B) are cleaved by the viral proteases. Autoprocessing between NS2 and NS3 is mediated by the NS2 cysteine protease catalytic domain and regulated by the NS3 N-terminal domain. Phosphorylated by host PKC and PKA. In terms of processing, ubiquitinated; mediated by UBE3A and leading to core protein subsequent proteasomal degradation. Post-translationally, highly N-glycosylated.

The protein resides in the host endoplasmic reticulum membrane. Its subcellular location is the host mitochondrion membrane. It localises to the virion. The protein localises to the host cytoplasm. It is found in the host nucleus. The protein resides in the host lipid droplet. Its subcellular location is the virion membrane. Packages viral RNA to form a viral nucleocapsid, and promotes virion budding. Participates in the viral particle production as a result of its interaction with the non-structural protein 5A. Binds RNA and may function as a RNA chaperone to induce the RNA structural rearrangements taking place during virus replication. Modulates viral translation initiation by interacting with viral IRES and 40S ribosomal subunit. Affects various cell signaling pathways, host immunity and lipid metabolism. Prevents the establishment of cellular antiviral state by blocking the interferon-alpha/beta (IFN-alpha/beta) and IFN-gamma signaling pathways and by blocking the formation of phosphorylated STAT1 and promoting ubiquitin-mediated proteasome-dependent degradation of STAT1. Activates STAT3 leading to cellular transformation. Regulates the activity of cellular genes, including c-myc and c-fos. May repress the promoter of p53, and sequester CREB3 and SP110 isoform 3/Sp110b in the cytoplasm. Represses cell cycle negative regulating factor CDKN1A, thereby interrupting an important check point of normal cell cycle regulation. Targets transcription factors involved in the regulation of inflammatory responses and in the immune response: suppresses TNF-induced NF-kappa-B activation, and activates AP-1. Binds to dendritic cells (DCs) via C1QR1, resulting in down-regulation of T-lymphocytes proliferation. Alters lipid metabolism by interacting with hepatocellular proteins involved in lipid accumulation and storage. Induces up-regulation of FAS promoter activity, and thereby contributes to the increased triglyceride accumulation in hepatocytes (steatosis). Its function is as follows. Forms a heterodimer with envelope glycoprotein E2, which mediates virus attachment to the host cell, virion internalization through clathrin-dependent endocytosis and fusion with host membrane. Fusion with the host cell is most likely mediated by both E1 and E2, through conformational rearrangements of the heterodimer required for fusion rather than a classical class II fusion mechanism. E1/E2 heterodimer binds host apolipoproteins such as APOB and ApoE thereby forming a lipo-viro-particle (LVP). APOE associated to the LVP allows the initial virus attachment to cell surface receptors such as the heparan sulfate proteoglycans (HSPGs), syndecan-1 (SDC1), syndecan-1 (SDC2), the low-density lipoprotein receptor (LDLR) and scavenger receptor class B type I (SCARB1). The cholesterol transfer activity of SCARB1 allows E2 exposure and binding of E2 to SCARB1 and the tetraspanin CD81. E1/E2 heterodimer binding on CD81 activates the epithelial growth factor receptor (EGFR) signaling pathway. Diffusion of the complex E1-E2-EGFR-SCARB1-CD81 to the cell lateral membrane allows further interaction with Claudin 1 (CLDN1) and occludin (OCLN) to finally trigger HCV entry. In terms of biological role, forms a heterodimer with envelope glycoprotein E1, which mediates virus attachment to the host cell, virion internalization through clathrin-dependent endocytosis and fusion with host membrane. Fusion with the host cell is most likely mediated by both E1 and E2, through conformational rearrangements of the heterodimer required for fusion rather than a classical class II fusion mechanism. The interaction between envelope glycoprotein E2 and host apolipoprotein E/APOE allows the proper assembly, maturation and infectivity of the viral particles. This interaction is probably promoted via the up-regulation of cellular autophagy by the virus. E1/E2 heterodimer binds host apolipoproteins such as APOB and APOE thereby forming a lipo-viro-particle (LVP). APOE associated to the LVP allows the initial virus attachment to cell surface receptors such as the heparan sulfate proteoglycans (HSPGs), syndecan-1 (SDC1), syndecan-1 (SDC2), the low-density lipoprotein receptor (LDLR) and scavenger receptor class B type I (SCARB1). The cholesterol transfer activity of SCARB1 allows E2 exposure and binding of E2 to SCARB1 and the tetraspanin CD81. E1/E2 heterodimer binding on CD81 activates the epithelial growth factor receptor (EGFR) signaling pathway. Diffusion of the complex E1-E2-EGFR-SCARB1-CD81 to the cell lateral membrane allows further interaction with Claudin 1 (CLDN1) and occludin (OCLN) to finally trigger HCV entry. Inhibits host EIF2AK2/PKR activation, preventing the establishment of an antiviral state. Viral ligand for CD209/DC-SIGN and CLEC4M/DC-SIGNR, which are respectively found on dendritic cells (DCs), and on liver sinusoidal endothelial cells and macrophage-like cells of lymph node sinuses. These interactions allow the capture of circulating HCV particles by these cells and subsequent facilitated transmission to permissive cells such as hepatocytes and lymphocyte subpopulations. This chain is Genome polyprotein, found in Hepatitis C virus (isolate HCT27) (HCV).